Here is a 416-residue protein sequence, read N- to C-terminus: Putative gustatory receptor 57a (416 aa).

At 1-13 (MAVLYFFREPETV) the chain is on the cytoplasmic side. The chain crosses the membrane as a helical span at residues 14 to 34 (FDCAAFICILQFLMGCNGFGI). The Extracellular segment spans residues 35 to 48 (RRSTFRISWASRIY). A helical membrane pass occupies residues 49–69 (SMSVAIAAFCCLFGSLSVLLA). The Cytoplasmic segment spans residues 70-83 (EEDIRERLAKADNL). A helical transmembrane segment spans residues 84–104 (VLSISALELLMSTLVFGVTVI). Over 105–143 (SLQVFARRHLGIYQRLAALDARLMSDFGANLNYRKMLRK) the chain is Extracellular. The chain crosses the membrane as a helical span at residues 144 to 164 (NIAVLGIVTTIYLMAINSAAV). The Cytoplasmic portion of the chain corresponds to 165-171 (QVASGHR). Residues 172–192 (ALFLLFALCYTIVTGGPHFTG) form a helical membrane-spanning segment. The Extracellular portion of the chain corresponds to 193 to 295 (YVHMTLAEML…NEEENGSCYR (103 aa)). The N-linked (GlcNAc...) asparagine glycan is linked to Asn290. A helical transmembrane segment spans residues 296–316 (MLGYLALVMIPPLYKLLIAPF). The Cytoplasmic portion of the chain corresponds to 317–374 (YCDRTIYEARRCLRLVEKLDDWFPQKSSLRPLVESLMSWRIQAKIQFTSGLDVVLSRK). The helical transmembrane segment at 375–395 (VIGLFTSILVNYLLILIQFAM) threads the bilayer. The Extracellular segment spans residues 396–416 (TQKMGEQIEQQKIALQEWIGF).

It belongs to the insect chemoreceptor superfamily. Gustatory receptor (GR) family. Gr57a subfamily. As to expression, in larvae, is expressed in neurons of the terminal external chemosensory organ as well as in the dorsal pharyngeal sense organ.

It is found in the cell membrane. In terms of biological role, probable gustatory receptor which mediates acceptance or avoidance behavior, depending on its substrates. The sequence is that of Putative gustatory receptor 57a (Gr57a) from Drosophila melanogaster (Fruit fly).